A 370-amino-acid polypeptide reads, in one-letter code: MSSLPRGFEPQTPEDLGQRSLAELREMLKRQERLLRNVKFICKLPDKGKKISDAVTKLKAAIAEREEVRGRSELFYPVSLDCKERQKAIAVVDGDRDKAQNSDQILDTSSPVPGCSSVANITSSQTTSRQQGLAHPTRGGDAEAAEAEHTVSEHPTSSSGAPAPSSSQASEGLPQHCALGQVEDHPGSSDNLFIDRLQRITIADPTEHHSEGNRNPENLAGLWSGPQKKPHYMEVLEMRAKNPMPPPHKFKTNVLPSQPRDSSSACQRRGSPISSEERRRRDRKHLDDITAARLLPLHHLPTQLLSIEESLALQRQQKQSYEEIQAKLAAQKLAERLNIKMQSYNPEGESSRKYREVRDEDDDQSSEDEF.

The tract at residues 1–20 (MSSLPRGFEPQTPEDLGQRS) is disordered. The stretch at 15-69 (DLGQRSLAELREMLKRQERLLRNVKFICKLPDKGKKISDAVTKLKAAIAEREEVR) forms a coiled coil. The tract at residues 29–68 (KRQERLLRNVKFICKLPDKGKKISDAVTKLKAAIAEREEV) is important for transcription repressor activity. Disordered regions lie at residues 93 to 172 (DGDR…ASEG), 204 to 226 (DPTE…WSGP), and 241 to 283 (KNPM…RRDR). Residues 101-131 (NSDQILDTSSPVPGCSSVANITSSQTTSRQQ) show a composition bias toward polar residues. Residues 138–152 (RGGDAEAAEAEHTVS) are compositionally biased toward basic and acidic residues. A compositionally biased stretch (low complexity) spans 155 to 170 (PTSSSGAPAPSSSQAS). Residues 205 to 214 (PTEHHSEGNR) show a composition bias toward basic and acidic residues. An interaction with Pol II region spans residues 228–299 (KKPHYMEVLE…TAARLLPLHH (72 aa)). Polar residues predominate over residues 254-266 (VLPSQPRDSSSAC). Position 271 is a phosphoserine (S271). Residues 300-315 (LPTQLLSIEESLALQR) form an important for transcription repressor activity region. Positions 303–328 (QLLSIEESLALQRQQKQSYEEIQAKL) form a coiled coil. The segment at 316 to 341 (QQKQSYEEIQAKLAAQKLAERLNIKM) is interaction with Pol II. Positions 340-370 (KMQSYNPEGESSRKYREVRDEDDDQSSEDEF) are disordered. Basic and acidic residues predominate over residues 349-358 (ESSRKYREVR). The span at 359-370 (DEDDDQSSEDEF) shows a compositional bias: acidic residues.

Belongs to the GRINL1 family. In terms of assembly, component of the Pol II(G) complex, which contains the RNA polymerase II (Pol II) core complex subunits and POLR2M and appears to be an abundant form of Pol II. Dephosphorylated at Ser-271 by the PNUTS-PP1 complex, promoting RNA polymerase II transcription pause-release.

It localises to the nucleus. Functionally, appears to be a stable component of the Pol II(G) complex form of RNA polymerase II (Pol II). Pol II synthesizes mRNA precursors and many functional non-coding RNAs and is the central component of the basal RNA polymerase II transcription machinery. May play a role in Mediator complex-dependent regulation of transcription activation. Acts in vitro as a negative regulator of transcriptional activation; this repression is relieved by the Mediator complex, which restores Pol II(G) activator-dependent transcription to a level equivalent to that of Pol II. This chain is DNA-directed RNA polymerase II subunit GRINL1A (POLR2M), found in Bos taurus (Bovine).